A 222-amino-acid chain; its full sequence is MIITVDGPSGAGKGTLCYALAEKLGYALLDSGAIYRVTALAALQRKTDLTNETDLAELARHLDIQFIPQNGEVNIFLAGMDVSRLIRTQEVADAASKVAVFQKVRSALLQLQQDFAKNDGLIADGRDMGTVVFPNAQVKLFLDASAEERAKRRYKQLQNKGINGNFAQILAEIKERDFRDRNREVAPLKPADDAFYYSLNSSIISCAFFTISSEPTNSGTRS.

An ATP-binding site is contributed by 7-15 (GPSGAGKGT).

Belongs to the cytidylate kinase family. Type 1 subfamily.

It localises to the cytoplasm. The enzyme catalyses CMP + ATP = CDP + ADP. It catalyses the reaction dCMP + ATP = dCDP + ADP. The polypeptide is Cytidylate kinase 2 (Haemophilus influenzae (strain ATCC 51907 / DSM 11121 / KW20 / Rd)).